The following is a 341-amino-acid chain: Glucokinase (341 aa).

18 to 23 provides a ligand contact to ATP; sequence GDIGGT.

The protein belongs to the bacterial glucokinase family.

Its subcellular location is the cytoplasm. It carries out the reaction D-glucose + ATP = D-glucose 6-phosphate + ADP + H(+). This Rhizobium etli (strain CIAT 652) protein is Glucokinase.